A 907-amino-acid polypeptide reads, in one-letter code: Glutamate receptor 1 (907 aa).

An N-terminal signal peptide occupies residues 1 to 18 (MPYIFAFFCTGFLGAVVG). Over 19–536 (ANFPNNIQIG…GVFSFLDPLA (518 aa)) the chain is Extracellular. Residues asparagine 63, asparagine 249, asparagine 257, asparagine 363, asparagine 401, and asparagine 406 are each glycosylated (N-linked (GlcNAc...) asparagine). The cysteines at positions 75 and 323 are disulfide-linked. Positions 492, 494, and 499 each coordinate L-glutamate. The chain crosses the membrane as a helical span at residues 537–557 (YEIWMCIVFAYIGVSVVLFLV). Over 558–584 (SRFSPYEWHSEEFEEGRDQTTSDQSNE) the chain is Cytoplasmic. Positions 585–600 (FGIFNSLWFSLGAFMQ) form an intramembrane region, helical; Pore-forming. Residues 601–603 (QGC) lie within the membrane without spanning it. A lipid anchor (S-palmitoyl cysteine) is attached at cysteine 603. At 604-609 (DISPRS) the chain is on the cytoplasmic side. A helical membrane pass occupies residues 610-630 (LSGRIVGGVWWFFTLIIISSY). At 631 to 805 (TANLAAFLTV…DKTSALSLSN (175 aa)) the chain is on the extracellular side. Serine 645 is modified (phosphoserine). Positions 668 and 669 each coordinate L-glutamate. Serine 710 is subject to Phosphoserine; by PKC. An L-glutamate-binding site is contributed by glutamate 719. A disulfide bridge links cysteine 732 with cysteine 787. The chain crosses the membrane as a helical span at residues 806–826 (VAGVFYILIGGLGLAMLVALI). Over 827–907 (EFCYKSRSES…SGMPLGATGL (81 aa)) the chain is Cytoplasmic. Cysteine 829 carries S-palmitoyl cysteine lipidation. Position 849 is a phosphoserine; by PKC, PKA and CAMK2 (serine 849). Positions 857–881 (STLPRNSGAGASGGGGSGENGRVVS) are disordered. Serine 863 is subject to Phosphoserine; by PKC, PKA and PKG/PRKG2. Positions 866–875 (GASGGGGSGE) are enriched in gly residues. The short motif at 904-907 (ATGL) is the PDZ-binding element.

This sequence belongs to the glutamate-gated ion channel (TC 1.A.10.1) family. GRIA1 subfamily. In terms of assembly, homotetramer or heterotetramer of pore-forming glutamate receptor subunits; heteromeric assembly can be the result of both receptor subtype and flip-flop forms and according the composition, one partner can be dominant with respect to the fast desensitizing current component, whereas the other can determine the steady-state component. Tetramers may be formed by the dimerization of dimers. Found in a complex with GRIA2, GRIA3, GRIA4, CNIH2, CNIH3, CACNG2, CACNG3, CACNG4, CACNG5, CACNG7 and CACNG8. Interacts with HIP1 and RASGRF2. Interacts with SYNDIG1 and GRIA2. Interacts with DLG1 (via C-terminus). Interacts with LRFN1. Interacts with PRKG2. Interacts with CNIH2 and CACNG2. Interacts with CACNG5; this interaction modulates the gating. Interacts (via C-terminus) with PDLIM4 (via LIM domain); this interaction as well as the interaction of PDLIM4 with alpha-actinin is required for their colocalization in early endosomes. Interacts with SNX27 (via PDZ domain); the interaction is required for recycling to the plasma membrane when endocytosed and prevent degradation in lysosomes. Interacts (via PDZ-binding motif) with SHANK3 (via PDZ domain). Interacts with CACNG3; associates GRIA1 with the adapter protein complex 4 (AP-4) to target GRIA1 to the somatodendritic compartment of neurons. Interacts with CACNG2; this interaction mediates traffick to the plasma membrane and modulation of desensitization. Interaction with CNIH2 and CNIH3; this interaction promotes expression at the plasma membrane and extensively modulates their gating properties by slowing deactivation and desensitization kinetics. Found in a complex with GRIA2, GRIA3, GRIA4, DLG4, CACNG8 and CNIH2. Post-translationally, phosphorylated at Ser-645. Phosphorylated at Ser-710 by PKC. Phosphorylated at Ser-849 by PKC, PKA and CAMK2. Phosphorylated at Ser-863 by PKC, PKA and PRKG2. Phosphorylation of Ser-863 is reduced by induction of long-term depression and increased by induction of long-term potentiation. In terms of processing, palmitoylated. Depalmitoylated by CPT1C and upon L-glutamate stimulation. ZDHHC3/GODZ specifically palmitoylates Cys-603, which leads to Golgi retention and decreased cell surface expression. In contrast, Cys-829 palmitoylation does not affect cell surface expression but regulates stimulation-dependent endocytosis. As to expression, detected in cerebellum (at protein level).

The protein localises to the cell membrane. Its subcellular location is the endoplasmic reticulum membrane. It is found in the postsynaptic cell membrane. The protein resides in the postsynaptic density membrane. It localises to the cell projection. The protein localises to the dendrite. Its subcellular location is the dendritic spine. It is found in the early endosome membrane. The protein resides in the recycling endosome membrane. It localises to the presynapse. The protein localises to the synapse. The enzyme catalyses Ca(2+)(in) = Ca(2+)(out). The catalysed reaction is Na(+)(in) = Na(+)(out). It carries out the reaction Mg(2+)(in) = Mg(2+)(out). It catalyses the reaction Li(+)(in) = Li(+)(out). The enzyme catalyses K(+)(in) = K(+)(out). The catalysed reaction is Sr(2+)(in) = Sr(2+)(out). With respect to regulation, glutamate-gated receptor activity inhibited by DNQX (6,7-dinitroquinoxaline-2,3-dione). Ionotropic glutamate receptor that functions as a ligand-gated cation channel, gated by L-glutamate and glutamatergic agonists such as alpha-amino-3-hydroxy-5-methyl-4-isoxazolepropionic acid (AMPA), quisqualic acid, and kainic acid. L-glutamate acts as an excitatory neurotransmitter at many synapses in the central nervous system. Binding of the excitatory neurotransmitter L-glutamate induces a conformation change, leading to the opening of the cation channel, and thereby converts the chemical signal to an electrical impulse upon entry of monovalent and divalent cations such as sodium and calcium. The receptor then desensitizes rapidly and enters in a transient inactive state, characterized by the presence of bound agonist. In the presence of CACNG2 or CACNG4 or CACNG7 or CACNG8, shows resensitization which is characterized by a delayed accumulation of current flux upon continued application of L-glutamate. Resensitization is blocked by CNIH2 through interaction with CACNG8 in the CACNG8-containing AMPA receptors complex. Calcium (Ca(2+)) permeability depends on subunits composition and, heteromeric channels containing edited GRIA2 subunit are calcium-impermeable. Also permeable to other divalents cations such as strontium(2+) and magnesium(2+) and monovalent cations such as potassium(1+) and lithium(1+). The polypeptide is Glutamate receptor 1 (Rattus norvegicus (Rat)).